Reading from the N-terminus, the 107-residue chain is Chlorobenzene dioxygenase, ferredoxin component (107 aa).

A Rieske domain is found at threonine 4–valine 99. Positions 43, 45, 62, and 65 each coordinate [2Fe-2S] cluster.

It belongs to the bacterial ring-hydroxylating dioxygenase ferredoxin component family. In terms of assembly, this dioxygenase system consists of four proteins: the two subunits of the oxygenase component (TecA1 and TecA2), a ferredoxin (TecA3) and a ferredoxin reductase (TecA4). [2Fe-2S] cluster serves as cofactor.

Its pathway is aromatic compound metabolism. Part of the chlorobenzene dioxygenase system that catalyzes the dihydroxylation of a range of aromatic compounds, including chlorinated benzenes and toluenes, and dinuclear aromatics such as biphenyl and dibenzo-p-dioxin. The sequence is that of Chlorobenzene dioxygenase, ferredoxin component from Cupriavidus sp. (strain PS12).